The primary structure comprises 393 residues: Acetate kinase (393 aa).

Mg(2+) is bound at residue N10. ATP is bound at residue K17. R89 provides a ligand contact to substrate. D146 functions as the Proton donor/acceptor in the catalytic mechanism. ATP-binding positions include 204-208 (HLGNG), 278-280 (DMR), and 323-327 (GVGEN). Residue E376 participates in Mg(2+) binding.

The protein belongs to the acetokinase family. As to quaternary structure, homodimer. It depends on Mg(2+) as a cofactor. Requires Mn(2+) as cofactor.

It is found in the cytoplasm. It catalyses the reaction acetate + ATP = acetyl phosphate + ADP. The protein operates within metabolic intermediate biosynthesis; acetyl-CoA biosynthesis; acetyl-CoA from acetate: step 1/2. Functionally, catalyzes the formation of acetyl phosphate from acetate and ATP. Can also catalyze the reverse reaction. The sequence is that of Acetate kinase from Mycoplasma genitalium (strain ATCC 33530 / DSM 19775 / NCTC 10195 / G37) (Mycoplasmoides genitalium).